The primary structure comprises 322 residues: ATP-dependent 6-phosphofructokinase 1 (322 aa).

Position 11 (glycine 11) interacts with ATP. 21-25 is an ADP binding site; sequence RAVVR. ATP contacts are provided by residues 72–73 and 102–105; these read RS and GDGT. Aspartate 103 is a binding site for Mg(2+). 126-128 is a substrate binding site; the sequence is TID. Residue aspartate 128 is the Proton acceptor of the active site. Arginine 155 is a binding site for ADP. Residues arginine 163 and 170-172 each bind substrate; that span reads MGR. Residues 186-188, arginine 212, and 214-216 each bind ADP; these read GAE and KKS. Substrate contacts are provided by residues glutamate 223, arginine 246, and 252–255; that span reads HIQR.

The protein belongs to the phosphofructokinase type A (PFKA) family. ATP-dependent PFK group I subfamily. Prokaryotic clade 'B1' sub-subfamily. As to quaternary structure, homotetramer. It depends on Mg(2+) as a cofactor.

It localises to the cytoplasm. It carries out the reaction beta-D-fructose 6-phosphate + ATP = beta-D-fructose 1,6-bisphosphate + ADP + H(+). It functions in the pathway carbohydrate degradation; glycolysis; D-glyceraldehyde 3-phosphate and glycerone phosphate from D-glucose: step 3/4. Its activity is regulated as follows. Allosterically activated by ADP and other diphosphonucleosides. Allosterically inhibited by phosphoenolpyruvate which induces the dissociation of the active tetramer into an inactive two-subunit forms. In terms of biological role, catalyzes the phosphorylation of D-fructose 6-phosphate to fructose 1,6-bisphosphate by ATP, the first committing step of glycolysis. The sequence is that of ATP-dependent 6-phosphofructokinase 1 from Thermus thermophilus (strain ATCC 27634 / DSM 579 / HB8).